Consider the following 187-residue polypeptide: MAAQDCPVRPPVIAPATGGVDAPIVNVAPVQKILDVCRAMSLWPMTFGLACCAIEMMAVGMARFDISRFGAEVFRPSPRQSDLMIVAGTVTRKMAPALVRLYEQMPAPRYVMALGNCAISGGPFNFEGQYAIVEGVDNLVPVDVYVPGCPPRPEALLEGLFQIQHKITGRRWWPVPAEISGSMGGGA.

Cys51, Cys52, Cys117, and Cys149 together coordinate [4Fe-4S] cluster.

Belongs to the complex I 20 kDa subunit family. In terms of assembly, NDH-1 is composed of 14 different subunits. Subunits NuoB, C, D, E, F, and G constitute the peripheral sector of the complex. Requires [4Fe-4S] cluster as cofactor.

It localises to the cell inner membrane. The catalysed reaction is a quinone + NADH + 5 H(+)(in) = a quinol + NAD(+) + 4 H(+)(out). Its function is as follows. NDH-1 shuttles electrons from NADH, via FMN and iron-sulfur (Fe-S) centers, to quinones in the respiratory chain. The immediate electron acceptor for the enzyme in this species is believed to be ubiquinone. Couples the redox reaction to proton translocation (for every two electrons transferred, four hydrogen ions are translocated across the cytoplasmic membrane), and thus conserves the redox energy in a proton gradient. The protein is NADH-quinone oxidoreductase subunit B of Nitratidesulfovibrio vulgaris (strain DSM 19637 / Miyazaki F) (Desulfovibrio vulgaris).